We begin with the raw amino-acid sequence, 318 residues long: 4-hydroxy-3-methylbut-2-enyl diphosphate reductase (318 aa).

Cys12 is a binding site for [4Fe-4S] cluster. The (2E)-4-hydroxy-3-methylbut-2-enyl diphosphate site is built by His41 and His74. Dimethylallyl diphosphate is bound by residues His41 and His74. 2 residues coordinate isopentenyl diphosphate: His41 and His74. Cys96 provides a ligand contact to [4Fe-4S] cluster. His124 is a (2E)-4-hydroxy-3-methylbut-2-enyl diphosphate binding site. Residue His124 participates in dimethylallyl diphosphate binding. His124 serves as a coordination point for isopentenyl diphosphate. The Proton donor role is filled by Glu126. Thr167 provides a ligand contact to (2E)-4-hydroxy-3-methylbut-2-enyl diphosphate. Cys197 provides a ligand contact to [4Fe-4S] cluster. (2E)-4-hydroxy-3-methylbut-2-enyl diphosphate contacts are provided by Ser225, Ser226, Asn227, and Ser269. Positions 225, 226, 227, and 269 each coordinate dimethylallyl diphosphate. Positions 225, 226, 227, and 269 each coordinate isopentenyl diphosphate.

Belongs to the IspH family. [4Fe-4S] cluster serves as cofactor.

The enzyme catalyses isopentenyl diphosphate + 2 oxidized [2Fe-2S]-[ferredoxin] + H2O = (2E)-4-hydroxy-3-methylbut-2-enyl diphosphate + 2 reduced [2Fe-2S]-[ferredoxin] + 2 H(+). The catalysed reaction is dimethylallyl diphosphate + 2 oxidized [2Fe-2S]-[ferredoxin] + H2O = (2E)-4-hydroxy-3-methylbut-2-enyl diphosphate + 2 reduced [2Fe-2S]-[ferredoxin] + 2 H(+). It participates in isoprenoid biosynthesis; dimethylallyl diphosphate biosynthesis; dimethylallyl diphosphate from (2E)-4-hydroxy-3-methylbutenyl diphosphate: step 1/1. Its pathway is isoprenoid biosynthesis; isopentenyl diphosphate biosynthesis via DXP pathway; isopentenyl diphosphate from 1-deoxy-D-xylulose 5-phosphate: step 6/6. Its function is as follows. Catalyzes the conversion of 1-hydroxy-2-methyl-2-(E)-butenyl 4-diphosphate (HMBPP) into a mixture of isopentenyl diphosphate (IPP) and dimethylallyl diphosphate (DMAPP). Acts in the terminal step of the DOXP/MEP pathway for isoprenoid precursor biosynthesis. The polypeptide is 4-hydroxy-3-methylbut-2-enyl diphosphate reductase (Francisella tularensis subsp. mediasiatica (strain FSC147)).